Reading from the N-terminus, the 88-residue chain is Small ribosomal subunit protein bS16 (88 aa).

Belongs to the bacterial ribosomal protein bS16 family.

This is Small ribosomal subunit protein bS16 from Geobacter sulfurreducens (strain ATCC 51573 / DSM 12127 / PCA).